Consider the following 397-residue polypeptide: CCA-adding enzyme (397 aa).

Residues glycine 26 and arginine 29 each contribute to the ATP site. Residues glycine 26 and arginine 29 each contribute to the CTP site. The Mg(2+) site is built by aspartate 39 and aspartate 41. ATP is bound by residues arginine 110, aspartate 153, arginine 156, arginine 159, and arginine 162. Residues arginine 110, aspartate 153, arginine 156, arginine 159, and arginine 162 each coordinate CTP.

The protein belongs to the tRNA nucleotidyltransferase/poly(A) polymerase family. Bacterial CCA-adding enzyme type 3 subfamily. As to quaternary structure, homodimer. Mg(2+) serves as cofactor.

It carries out the reaction a tRNA precursor + 2 CTP + ATP = a tRNA with a 3' CCA end + 3 diphosphate. It catalyses the reaction a tRNA with a 3' CCA end + 2 CTP + ATP = a tRNA with a 3' CCACCA end + 3 diphosphate. Functionally, catalyzes the addition and repair of the essential 3'-terminal CCA sequence in tRNAs without using a nucleic acid template. Adds these three nucleotides in the order of C, C, and A to the tRNA nucleotide-73, using CTP and ATP as substrates and producing inorganic pyrophosphate. tRNA 3'-terminal CCA addition is required both for tRNA processing and repair. Also involved in tRNA surveillance by mediating tandem CCA addition to generate a CCACCA at the 3' terminus of unstable tRNAs. While stable tRNAs receive only 3'-terminal CCA, unstable tRNAs are marked with CCACCA and rapidly degraded. The sequence is that of CCA-adding enzyme from Bacillus cereus (strain ATCC 10987 / NRS 248).